Consider the following 417-residue polypeptide: Aminoacyltransferase FemB (417 aa).

Belongs to the FemABX family.

It is found in the cytoplasm. The catalysed reaction is MurNAc-L-Ala-D-isoglutaminyl-L-Lys-(N(6)-tri-Gly)-D-Ala-D-Ala-diphospho-di-trans,octa-cis-undecaprenyl-GlcNAc + 2 glycyl-tRNA(Gly) = MurNAc-L-Ala-D-isoglutaminyl-L-Lys-(N(6)-penta-Gly)-D-Ala-D-Ala-diphospho-di-trans,octa-cis-undecaprenyl-GlcNAc + 2 tRNA(Gly) + 2 H(+). Functionally, catalyzes the incorporation of amino acid(s) into the interchain peptide bridge of peptidoglycan, using aminoacyl-tRNA as amino acid donor. This chain is Aminoacyltransferase FemB (femB), found in Staphylococcus epidermidis (strain ATCC 35984 / DSM 28319 / BCRC 17069 / CCUG 31568 / BM 3577 / RP62A).